Here is a 62-residue protein sequence, read N- to C-terminus: Large ribosomal subunit protein bL28 (62 aa).

The protein belongs to the bacterial ribosomal protein bL28 family.

The chain is Large ribosomal subunit protein bL28 from Thermoanaerobacter pseudethanolicus (strain ATCC 33223 / 39E) (Clostridium thermohydrosulfuricum).